Here is a 955-residue protein sequence, read N- to C-terminus: Translation initiation factor IF-2 (955 aa).

Residues 49–352 (AFSQSSESTE…QAPSFGGVKI (304 aa)) form a disordered region. The span at 77 to 88 (PQQQTKASAPSA) shows a compositional bias: low complexity. Composition is skewed to pro residues over residues 95–121 (PAVP…PGPR), 149–159 (RPVPKPGPRPG), 188–202 (RPGP…PPRP), and 209–223 (PPRP…PRPG). The span at 225–235 (GTAGGRPGSSA) shows a compositional bias: gly residues. The span at 238-264 (PPRPVPRPGPRPSPMNMPASRPTPPGG) shows a compositional bias: pro residues. The span at 273 to 322 (SGGGRGRGGGGGAGPRGGGAGGGAPRTGFGGRPGGGRGRGGTAGAFGRPG) shows a compositional bias: gly residues. Positions 326 to 335 (SRSRKSKKQR) are enriched in basic residues. Residues 448 to 620 (PRAPVVTVMG…IILTADAELD (173 aa)) enclose the tr-type G domain. Residues 457-464 (GHVDHGKT) form a G1 region. 457–464 (GHVDHGKT) is a binding site for GTP. The interval 482–486 (GITQH) is G2. The tract at residues 507–510 (DTPG) is G3. GTP-binding positions include 507 to 511 (DTPGH) and 561 to 564 (NKID). The segment at 561–564 (NKID) is G4. Residues 597-599 (SAK) are G5.

The protein belongs to the TRAFAC class translation factor GTPase superfamily. Classic translation factor GTPase family. IF-2 subfamily.

Its subcellular location is the cytoplasm. One of the essential components for the initiation of protein synthesis. Protects formylmethionyl-tRNA from spontaneous hydrolysis and promotes its binding to the 30S ribosomal subunits. Also involved in the hydrolysis of GTP during the formation of the 70S ribosomal complex. This is Translation initiation factor IF-2 from Thermobifida fusca (strain YX).